Consider the following 265-residue polypeptide: Ribosomal RNA small subunit methyltransferase G (265 aa).

Residues glycine 75, leucine 80, and arginine 145 each coordinate S-adenosyl-L-methionine. Residues 212–265 (RAVRSSQRTRAESRGGRGDGERHDGRQVRRTSRDSLRSREVGRDQPTRGQSRST) are disordered. Residues 220–257 (TRAESRGGRGDGERHDGRQVRRTSRDSLRSREVGRDQP) show a composition bias toward basic and acidic residues.

This sequence belongs to the methyltransferase superfamily. RNA methyltransferase RsmG family.

The protein resides in the cytoplasm. In terms of biological role, specifically methylates the N7 position of guanine in position 518 of 16S rRNA. This Frankia casuarinae (strain DSM 45818 / CECT 9043 / HFP020203 / CcI3) protein is Ribosomal RNA small subunit methyltransferase G.